A 501-amino-acid chain; its full sequence is Zinc finger protein PLAG1 (501 aa).

Residues 1 to 30 form a disordered region; the sequence is MATVIPGDLSEVRDTQKVPSGKRKRGETKP. The short motif at 22-25 is the Nuclear localization signal element; sequence KRKR. 7 C2H2-type zinc fingers span residues 34 to 56, 62 to 86, 92 to 114, 121 to 143, 150 to 172, 185 to 207, and 213 to 236; these read FPCQLCDKAFNSVEKLKVHSYSH, YKCTQQDCTKAFVSKYKLLRHMATH, HKCNYCEKMFHRKDHLKNHLHTH, FKCEECGKNYNTKLGFKRHLALH, LTCKVCLQTFESTGVLLEHLKTH, HQCEHCDRRFYTRKDVRRHMVVH, and FLCQYCAQRFGRKDHLTRHMKKSH. Low complexity-rich tracts occupy residues 366-380 and 455-467; these read SGMPSSSQDSQASSS and TQLPPQTQDPQDP. Disordered regions lie at residues 366–406 and 447–474; these read SGMP…GSVP and QEEAHSSMTQLPPQTQDPQDPSNSIGLG.

Belongs to the krueppel C2H2-type zinc-finger protein family. Expressed in nephroblastoma.

The protein resides in the nucleus. In terms of biological role, transcription factor and proto-oncogene whose activation results in up-regulation of target genes, such as IGFII, leading to uncontrolled cell proliferation. This Gallus gallus (Chicken) protein is Zinc finger protein PLAG1 (PLAG1).